The following is a 356-amino-acid chain: Alpha-N-acetylneuraminide alpha-2,8-sialyltransferase (356 aa).

The Cytoplasmic portion of the chain corresponds to 1–29 (MSPCGRARRHTSRGAMAVLAWKFPRTRLP). Residues 30–48 (VGASALCVVVLCWLYVFPV) traverse the membrane as a helical; Signal-anchor for type II membrane protein segment. At 49 to 356 (YRLPDEKEIV…CEDNSLQPTS (308 aa)) the chain is on the lumenal side. Asn71 and Asn119 each carry an N-linked (GlcNAc...) asparagine glycan. Cys138 and Cys287 form a disulfide bridge. CMP-N-acetyl-beta-neuraminate-binding residues include Asn143 and Asn166. 2 N-linked (GlcNAc...) asparagine glycosylation sites follow: Asn214 and Asn245. Positions 274, 275, 276, 296, and 310 each coordinate CMP-N-acetyl-beta-neuraminate.

Belongs to the glycosyltransferase 29 family.

Its subcellular location is the golgi apparatus membrane. It carries out the reaction an N-acetyl-alpha-neuraminyl-(2-&gt;3)-beta-D-galactosyl derivative + CMP-N-acetyl-beta-neuraminate = an N-acetyl-alpha-neuraminyl-(2-&gt;8)-N-acetyl-alpha-neuraminyl-(2-&gt;3)-beta-D-galactosyl derivative + CMP + H(+). The enzyme catalyses a ganglioside GM3 (d18:1(4E)) + CMP-N-acetyl-beta-neuraminate = a ganglioside GD3 (d18:1(4E)) + CMP + H(+). The catalysed reaction is a ganglioside GD3 (d18:1(4E)) + CMP-N-acetyl-beta-neuraminate = a ganglioside GT3 (d18:1(4E)) + CMP + H(+). It catalyses the reaction a ganglioside GD1a (d18:1(4E)) + CMP-N-acetyl-beta-neuraminate = a ganglioside GT1a (d18:1(4E)) + CMP + H(+). It carries out the reaction a ganglioside GT1b (d18:1(4E)) + CMP-N-acetyl-beta-neuraminate = a ganglioside GQ1b (d18:1(4E)) + CMP + H(+). The enzyme catalyses a ganglioside GM1b (d18:1(4E)) + CMP-N-acetyl-beta-neuraminate = a ganglioside GD1c (d18:1(4E)) + CMP + H(+). The catalysed reaction is a ganglioside GD3 + CMP-N-acetyl-beta-neuraminate = a ganglioside GT3 + CMP + H(+). It catalyses the reaction [alpha-N-acetylneuraminyl-(2-&gt;8)](n)-alpha-N-acetylneuraminyl-(2-&gt;8)-alpha-N-acetylneuraminyl-(2-&gt;3)-beta-D-galactosyl-(1-&gt;4)-beta-D-glucosyl-(1&lt;-&gt;1)-ceramide + CMP-N-acetyl-beta-neuraminate = [alpha-N-acetylneuraminyl-(2-&gt;8)](n+1)-alpha-N-acetylneuraminyl-(2-&gt;8)-alpha-N-acetylneuraminyl-(2-&gt;3)-beta-D-galactosyl-(1-&gt;4)-beta-D-glucosyl-(1&lt;-&gt;1)-ceramide + CMP + H(+). Its pathway is protein modification; protein glycosylation. The protein operates within lipid metabolism; sphingolipid metabolism. Functionally, catalyzes the addition of sialic acid in alpha 2,8-linkage to the sialic acid moiety of the ganglioside GM3 to form ganglioside GD3; gangliosides are a subfamily of complex glycosphingolipds that contain one or more residues of sialic acid. Can catalyze the addition of a second alpha-2,8- sialic acid to GD3 to form GT3. Can use GM1b, GD1a and GT1b as acceptor substrates to synthesize GD1c, GT1a and GQ1b respectively. The sequence is that of Alpha-N-acetylneuraminide alpha-2,8-sialyltransferase from Bos taurus (Bovine).